The primary structure comprises 127 residues: Anti-adapter protein IraD (127 aa).

This sequence belongs to the GpW/Gp25 family. IraD subfamily. As to quaternary structure, interacts with RssB.

It localises to the cytoplasm. In terms of biological role, inhibits RpoS proteolysis by regulating RssB activity, thereby increasing the stability of the sigma stress factor RpoS during oxidative stress. Its effect on RpoS stability is due to its interaction with RssB, which probably blocks the interaction of RssB with RpoS, and the consequent delivery of the RssB-RpoS complex to the ClpXP protein degradation pathway. This Escherichia coli (strain UTI89 / UPEC) protein is Anti-adapter protein IraD.